Here is a 398-residue protein sequence, read N- to C-terminus: Odorant receptor 24a (398 aa).

Residues 1-14 (MLPRFLTASYPMER) are Cytoplasmic-facing. The helical transmembrane segment at 15 to 31 (HYFMVPKFALSLIGFYP) threads the bilayer. The Extracellular portion of the chain corresponds to 32–46 (EQKRTVLVKLWSFFN). The helical transmembrane segment at 47-67 (FFILTYGCYAEAYYGIHYIPI) threads the bilayer. The Cytoplasmic segment spans residues 68–74 (NIATALD). Residues 75–95 (ALCPVASSILSLVKMVAIWWY) traverse the membrane as a helical segment. Residues 96–124 (QDELRSLIERVRFLTEQQKSKRKLGYKKR) are Extracellular-facing. The helical transmembrane segment at 125 to 145 (FYTLATQLTFLLLCCGFCTST) threads the bilayer. The Cytoplasmic portion of the chain corresponds to 146–199 (SYSVRHLIDNILRRTHGKDWIYETPFKMMFPDLLLRLPLYPITYILVHWHGYIT). Residues 200–220 (VVCFVGADGFFLGFCLYFTVL) form a helical membrane-spanning segment. The Extracellular segment spans residues 221 to 269 (LLCLQDDVCDLLEVENIEKSPSEAEEARIVREMEKLVDRHNEVAELTER). Residues 270-290 (LSGVMVEITLAHFVTSSLIIG) traverse the membrane as a helical segment. Topologically, residues 291 to 295 (TSVVD) are cytoplasmic. A helical membrane pass occupies residues 296–316 (ILLFSGLGIIVYVVYTCAVGV). Residues 317–398 (EIFLYCLGGS…SLIALAKSVI (82 aa)) lie on the Extracellular side of the membrane.

It belongs to the insect chemoreceptor superfamily. Heteromeric odorant receptor channel (TC 1.A.69) family. Or1a subfamily. Interacts with Orco. Complexes exist early in the endomembrane system in olfactory sensory neurons (OSNs), coupling these complexes to the conserved ciliary trafficking pathway. As to expression, not expressed in either the antenna or maxillary palp.

It localises to the cell membrane. Functionally, odorant receptor which mediates acceptance or avoidance behavior, depending on its substrates. The odorant receptor repertoire encodes a large collection of odor stimuli that vary widely in identity, intensity, and duration. May form a complex with Orco to form odorant-sensing units, providing sensitive and prolonged odorant signaling and calcium permeability. Involved in the behavioral responses to pentanol, hexanol, octanol, nonanol, propyl acetate, butyl acetate, isoamyl acetate, methyl caproate, anisole, heptanal, 2-heptanone, r-carvone, and nonanoic acid. Also responds to pyrazines. This Drosophila melanogaster (Fruit fly) protein is Odorant receptor 24a (Or24a).